Reading from the N-terminus, the 204-residue chain is Gellan lyase (204 aa).

In terms of assembly, multimer.

The protein resides in the secreted. It catalyses the reaction Eliminative cleavage of beta-D-glucopyranosyl-(1-&gt;4)-beta-D-glucopyranosyluronate bonds of gellan backbone releasing tetrasaccharides containing a 4-deoxy-4,5-unsaturated D-glucopyranosyluronic acid at the non-reducing end. The tetrasaccharide produced from deacetylated gellan is beta-D-4-deoxy-Delta(4)-GlcAp-(1-&gt;4)-beta-D-Glcp-(1-&gt;4)-alpha-L-Rhap-(1-&gt;3)-beta-D-Glcp.. With respect to regulation, activity is stimulated by zinc, potassium, lithium, cobalt, sodium, calcium, iron, manganase, magnesium and mercury ions at a concentration of 1 mM, but inhibited by copper ions at a concentration of 1 mM. Activity is inhibited by potassium, sodium and magnesium ions at a concentration of 1 M. Activity is inhibited by urea, EDTA, dithiothreitol, p-CMB, PSF, natrium lauryl sulfate and N-bromosuccinimide. Its function is as follows. Cleaves the glycosidic bonds of gellan backbone and releases tetrasaccharide units of glucuronyl-glucosyl-rhamnosyl-glucose with unsaturated glucuronic acid at the non-reducing terminal. The enzyme is highly specific to the heteropolysaccharide gellan. The polypeptide is Gellan lyase (Geobacillus stearothermophilus (Bacillus stearothermophilus)).